Here is a 436-residue protein sequence, read N- to C-terminus: tRNA modification GTPase MnmE (436 aa).

Positions 20, 77, and 117 each coordinate (6S)-5-formyl-5,6,7,8-tetrahydrofolate. The region spanning 214 to 360 is the TrmE-type G domain; sequence GLKIVIAGAP…FIKELESFCL (147 aa). GTP-binding positions include 224–229, 243–249, and 268–271; these read NSGKSS, MEEAGTT, and DTAG. Residues S228 and T249 each coordinate Mg(2+). K436 provides a ligand contact to (6S)-5-formyl-5,6,7,8-tetrahydrofolate.

It belongs to the TRAFAC class TrmE-Era-EngA-EngB-Septin-like GTPase superfamily. TrmE GTPase family. As to quaternary structure, homodimer. Heterotetramer of two MnmE and two MnmG subunits. The cofactor is K(+).

It is found in the cytoplasm. Functionally, exhibits a very high intrinsic GTPase hydrolysis rate. Involved in the addition of a carboxymethylaminomethyl (cmnm) group at the wobble position (U34) of certain tRNAs, forming tRNA-cmnm(5)s(2)U34. The chain is tRNA modification GTPase MnmE from Bartonella quintana (strain Toulouse) (Rochalimaea quintana).